A 324-amino-acid polypeptide reads, in one-letter code: Probable pectinesterase A (324 aa).

A signal peptide spans 1 to 19; that stretch reads MHLPSLVLGLLGLGLTASA. Asn-27 is a glycosylation site (N-linked (GlcNAc...) asparagine). A substrate-binding site is contributed by Gln-142. The Proton donor role is filled by Asp-165. Asp-186 functions as the Nucleophile in the catalytic mechanism. Asn-191 is a glycosylation site (N-linked (GlcNAc...) asparagine). 2 residues coordinate substrate: Arg-246 and Trp-248.

The protein belongs to the pectinesterase family.

The protein localises to the secreted. The enzyme catalyses [(1-&gt;4)-alpha-D-galacturonosyl methyl ester](n) + n H2O = [(1-&gt;4)-alpha-D-galacturonosyl](n) + n methanol + n H(+). Its pathway is glycan metabolism; pectin degradation; 2-dehydro-3-deoxy-D-gluconate from pectin: step 1/5. Involved in maceration and soft-rotting of plant tissue. The protein is Probable pectinesterase A (pmeA) of Neosartorya fischeri (strain ATCC 1020 / DSM 3700 / CBS 544.65 / FGSC A1164 / JCM 1740 / NRRL 181 / WB 181) (Aspergillus fischerianus).